The following is a 61-amino-acid chain: Small ribosomal subunit protein uS14 (61 aa).

Zn(2+) contacts are provided by cysteine 24, cysteine 27, cysteine 40, and cysteine 43.

Belongs to the universal ribosomal protein uS14 family. Zinc-binding uS14 subfamily. Part of the 30S ribosomal subunit. Contacts proteins S3 and S10. It depends on Zn(2+) as a cofactor.

Its function is as follows. Binds 16S rRNA, required for the assembly of 30S particles and may also be responsible for determining the conformation of the 16S rRNA at the A site. In Fervidobacterium nodosum (strain ATCC 35602 / DSM 5306 / Rt17-B1), this protein is Small ribosomal subunit protein uS14.